A 648-amino-acid polypeptide reads, in one-letter code: Acetyl-coenzyme A synthetase (648 aa).

Residues 191–194 (RGGR), T310, and N334 contribute to the CoA site. Residues 386 to 388 (GEP), 410 to 415 (DTWWQT), D499, and R514 each bind ATP. S522 is a CoA binding site. R525 lines the ATP pocket. V536, H538, and I541 together coordinate Mg(2+). R583 provides a ligand contact to CoA. Residue K608 is modified to N6-acetyllysine.

This sequence belongs to the ATP-dependent AMP-binding enzyme family. Mg(2+) serves as cofactor. Acetylated. Deacetylation by the SIR2-homolog deacetylase activates the enzyme.

The catalysed reaction is acetate + ATP + CoA = acetyl-CoA + AMP + diphosphate. Its function is as follows. Catalyzes the conversion of acetate into acetyl-CoA (AcCoA), an essential intermediate at the junction of anabolic and catabolic pathways. AcsA undergoes a two-step reaction. In the first half reaction, AcsA combines acetate with ATP to form acetyl-adenylate (AcAMP) intermediate. In the second half reaction, it can then transfer the acetyl group from AcAMP to the sulfhydryl group of CoA, forming the product AcCoA. The polypeptide is Acetyl-coenzyme A synthetase (Aeromonas salmonicida (strain A449)).